We begin with the raw amino-acid sequence, 443 residues long: Crinkler effector protein 161 (443 aa).

Residues 1–17 (MVKLSCVIVGVPGDPFQ) form the signal peptide. The interval 18 to 56 (VEIDEICELVAGLKDAIKKEKPDSIKCDADKLQLFKAAK) is LQLFLAK domain. A DWL domain region spans residues 57 to 126 (EDRTFSASGA…GMESPSISQI (70 aa)). Positions 127–133 (HVLVVLP) match the HVLVXXP motif motif. Residues 134–439 (EDSESEGGTS…RSMPGYCCAN (306 aa)) form an effector domain region. Short sequence motifs (nuclear localization signal) lie at residues 161 to 170 (ADKKRKRYWH) and 384 to 393 (HQPLKRLKLS).

It belongs to the Crinkler effector family.

It localises to the secreted. Its subcellular location is the host nucleus. Functionally, secreted effector that exhibits strong cell death suppression activity and suppresses cell death induced by a variety of effectors including CRN63, Avh241 and Avr3a. Protects host plants from biotic and abiotic stresses such as salinity and drought by up-regulation of many defense-related genes, including ABC transporters, Cytochrome P450 monooxygenases and receptor-like kinases (RLKs). Also enhances resistance to Phytophtora pathogens. The polypeptide is Crinkler effector protein 161 (Phytophthora sojae (strain P6497) (Soybean stem and root rot agent)).